Consider the following 257-residue polypeptide: Imidazole glycerol phosphate synthase subunit HisF (257 aa).

Catalysis depends on residues aspartate 11 and aspartate 130.

The protein belongs to the HisA/HisF family. As to quaternary structure, heterodimer of HisH and HisF.

It is found in the cytoplasm. It catalyses the reaction 5-[(5-phospho-1-deoxy-D-ribulos-1-ylimino)methylamino]-1-(5-phospho-beta-D-ribosyl)imidazole-4-carboxamide + L-glutamine = D-erythro-1-(imidazol-4-yl)glycerol 3-phosphate + 5-amino-1-(5-phospho-beta-D-ribosyl)imidazole-4-carboxamide + L-glutamate + H(+). Its pathway is amino-acid biosynthesis; L-histidine biosynthesis; L-histidine from 5-phospho-alpha-D-ribose 1-diphosphate: step 5/9. Its function is as follows. IGPS catalyzes the conversion of PRFAR and glutamine to IGP, AICAR and glutamate. The HisF subunit catalyzes the cyclization activity that produces IGP and AICAR from PRFAR using the ammonia provided by the HisH subunit. In Aliivibrio salmonicida (strain LFI1238) (Vibrio salmonicida (strain LFI1238)), this protein is Imidazole glycerol phosphate synthase subunit HisF.